Consider the following 253-residue polypeptide: 3-dehydroquinate dehydratase (253 aa).

Residues 46-48 (EWR) and Arg-82 contribute to the 3-dehydroquinate site. His-143 functions as the Proton donor/acceptor in the catalytic mechanism. Lys-170 functions as the Schiff-base intermediate with substrate in the catalytic mechanism. 3-dehydroquinate contacts are provided by Arg-213, Ser-232, and Gln-236.

This sequence belongs to the type-I 3-dehydroquinase family. In terms of assembly, homodimer.

The enzyme catalyses 3-dehydroquinate = 3-dehydroshikimate + H2O. It participates in metabolic intermediate biosynthesis; chorismate biosynthesis; chorismate from D-erythrose 4-phosphate and phosphoenolpyruvate: step 3/7. Its activity is regulated as follows. Inhibited by flavonoids such as datiscetin, naringenin, marein and phloretin. Functionally, involved in the third step of the chorismate pathway, which leads to the biosynthesis of aromatic amino acids (AroAA). Catalyzes the cis-dehydration of 3-dehydroquinate (DHQ) and introduces the first double bond of the aromatic ring to yield 3-dehydroshikimate. The reaction involves the formation of an imine intermediate between the keto group of 3-dehydroquinate and the epsilon-amino group of Lys-170 at the active site. The sequence is that of 3-dehydroquinate dehydratase from Enterococcus faecalis (strain ATCC 700802 / V583).